A 190-amino-acid chain; its full sequence is MNRYLLTTLSAPLLALFFSFSLQAAMLSQEIKSGWDTFTGNVQQTWQQPDAIDVYVPAITWHNRWTYDEEHIHRYNERPWGAGGGVSRYDEKGNWHGLYLMAFKDSFNKWEPFGGYGWEATWRPLQDQNFHYGLGYTAGVTARHNWGYYPVPAILPLASIGYGSLNFQMTYIPGTYNNGNVYFAWLRWQF.

A signal peptide spans 1-24 (MNRYLLTTLSAPLLALFFSFSLQA). Active-site residues include H62, D105, and S106.

Belongs to the lipid A palmitoyltransferase family. As to quaternary structure, homodimer.

The protein resides in the cell outer membrane. The catalysed reaction is a lipid A + a 1,2-diacyl-sn-glycero-3-phosphocholine = a hepta-acyl lipid A + a 2-acyl-sn-glycero-3-phosphocholine. It carries out the reaction a lipid IVA + a 1,2-diacyl-sn-glycero-3-phosphocholine = a lipid IVB + a 2-acyl-sn-glycero-3-phosphocholine. It catalyses the reaction a lipid IIA + a 1,2-diacyl-sn-glycero-3-phosphocholine = a lipid IIB + a 2-acyl-sn-glycero-3-phosphocholine. Its function is as follows. Transfers a fatty acid residue from the sn-1 position of a phospholipid to the N-linked hydroxyfatty acid chain on the proximal unit of lipid A or its precursors. The chain is Lipid A acyltransferase PagP from Pantoea ananatis (strain LMG 20103).